The following is a 211-amino-acid chain: Thioredoxin domain-containing protein 9 homolog (211 aa).

In terms of domain architecture, Thioredoxin spans 68–178 (YSEIHSEKDF…LEERIARAQV (111 aa)). Residues 184–203 (ESSSLKPKSTTQVRRNVRQS) are compositionally biased toward polar residues. A disordered region spans residues 184–211 (ESSSLKPKSTTQVRRNVRQSARSDSDSE).

The chain is Thioredoxin domain-containing protein 9 homolog from Arabidopsis thaliana (Mouse-ear cress).